A 373-amino-acid chain; its full sequence is Peptide chain release factor 2 (373 aa).

Gln251 bears the N5-methylglutamine mark.

The protein belongs to the prokaryotic/mitochondrial release factor family. In terms of processing, methylated by PrmC. Methylation increases the termination efficiency of RF2.

It localises to the cytoplasm. In terms of biological role, peptide chain release factor 2 directs the termination of translation in response to the peptide chain termination codons UGA and UAA. This is Peptide chain release factor 2 from Salinispora arenicola (strain CNS-205).